The following is a 183-amino-acid chain: Small ribosomal subunit protein uS4c (183 aa).

Residues 82–143 form the S4 RNA-binding domain; it reads MRLDNILFRL…KQRSKALIQN (62 aa).

It belongs to the universal ribosomal protein uS4 family. Part of the 30S ribosomal subunit. Contacts protein S5. The interaction surface between S4 and S5 is involved in control of translational fidelity.

The protein resides in the plastid. It is found in the chloroplast. In terms of biological role, one of the primary rRNA binding proteins, it binds directly to 16S rRNA where it nucleates assembly of the body of the 30S subunit. Functionally, with S5 and S12 plays an important role in translational accuracy. This is Small ribosomal subunit protein uS4c (rps4) from Aristea capitata.